Reading from the N-terminus, the 396-residue chain is LIM/homeobox protein Lhx9 (396 aa).

LIM zinc-binding domains follow at residues 69–130 (ALCA…RFSV) and 131–193 (QRCA…LIQG). 3 disordered regions span residues 248–272 (ENDADHLDRDQQPYPPSQKTKRMRT), 328–365 (RQENGGVDKADGTSLPPPSSDSGALTPPSTATTLTDLT), and 377–396 (SSLDSHESGSPPQTTLTNLF). Positions 267-326 (TKRMRTSFKHHQLRTMKSYFAINHNPDAKDLKQLAQKTGLTKRVLQVWFQNARAKFRRNV) form a DNA-binding region, homeobox. Residues 352–365 (LTPPSTATTLTDLT) are compositionally biased toward low complexity. Over residues 384–396 (SGSPPQTTLTNLF) the composition is skewed to polar residues.

The protein localises to the nucleus. Its function is as follows. May be involved in gonadal development. This is LIM/homeobox protein Lhx9 (lhx9) from Danio rerio (Zebrafish).